The primary structure comprises 314 residues: Testisin (314 aa).

A signal peptide spans 1–19 (MGARGALLLALLLARAGLR). Positions 20–41 (KPESQEAAPLSGPCGRRVITSR) are excised as a propeptide. 2 disulfides stabilise this stretch: C33–C157 and C67–C83. In terms of domain architecture, Peptidase S1 spans 42–286 (IVGGEDAELG…HFEWIQKLMA (245 aa)). Residues H82 and D137 each act as charge relay system in the active site. N-linked (GlcNAc...) asparagine glycosylation is found at N167 and N200. Disulfide bonds link C171/C244, C204/C223, and C234/C262. The Charge relay system role is filled by S238. N273 carries an N-linked (GlcNAc...) asparagine glycan. S288 carries the GPI-anchor amidated serine lipid modification. A propeptide spans 289–314 (GMSQPDPSWPLLFFPLLWALPLLGPV) (removed in mature form).

The protein belongs to the peptidase S1 family. As to expression, expressed predominantly in premeiotic testicular germ cells, mostly late pachytene and diplotene spermatocytes.

The protein resides in the cell membrane. Functionally, could regulate proteolytic events associated with testicular germ cell maturation. The polypeptide is Testisin (PRSS21) (Homo sapiens (Human)).